Consider the following 110-residue polypeptide: Large ribosomal subunit protein uL22 (110 aa).

It belongs to the universal ribosomal protein uL22 family. Part of the 50S ribosomal subunit.

Functionally, this protein binds specifically to 23S rRNA; its binding is stimulated by other ribosomal proteins, e.g. L4, L17, and L20. It is important during the early stages of 50S assembly. It makes multiple contacts with different domains of the 23S rRNA in the assembled 50S subunit and ribosome. Its function is as follows. The globular domain of the protein is located near the polypeptide exit tunnel on the outside of the subunit, while an extended beta-hairpin is found that lines the wall of the exit tunnel in the center of the 70S ribosome. In Halorhodospira halophila (strain DSM 244 / SL1) (Ectothiorhodospira halophila (strain DSM 244 / SL1)), this protein is Large ribosomal subunit protein uL22.